The sequence spans 265 residues: Indole-3-glycerol phosphate synthase (265 aa).

Belongs to the TrpC family.

It carries out the reaction 1-(2-carboxyphenylamino)-1-deoxy-D-ribulose 5-phosphate + H(+) = (1S,2R)-1-C-(indol-3-yl)glycerol 3-phosphate + CO2 + H2O. It functions in the pathway amino-acid biosynthesis; L-tryptophan biosynthesis; L-tryptophan from chorismate: step 4/5. The chain is Indole-3-glycerol phosphate synthase from Syntrophobacter fumaroxidans (strain DSM 10017 / MPOB).